Consider the following 92-residue polypeptide: Small ribosomal subunit protein uS19c (92 aa).

Belongs to the universal ribosomal protein uS19 family.

Its subcellular location is the plastid. It is found in the chloroplast. Its function is as follows. Protein S19 forms a complex with S13 that binds strongly to the 16S ribosomal RNA. This is Small ribosomal subunit protein uS19c from Phaeodactylum tricornutum (strain CCAP 1055/1).